A 460-amino-acid chain; its full sequence is A-type ATP synthase subunit B (460 aa).

Belongs to the ATPase alpha/beta chains family. As to quaternary structure, has multiple subunits with at least A(3), B(3), C, D, E, F, H, I and proteolipid K(x).

It localises to the cell membrane. In terms of biological role, component of the A-type ATP synthase that produces ATP from ADP in the presence of a proton gradient across the membrane. The B chain is a regulatory subunit. This chain is A-type ATP synthase subunit B, found in Methanosarcina barkeri (strain Fusaro / DSM 804).